The following is a 181-amino-acid chain: Oligoribonuclease (181 aa).

The Exonuclease domain occupies 8-171; that stretch reads LIWLDLEMTG…DDIKESIAEL (164 aa). Y129 is an active-site residue.

The protein belongs to the oligoribonuclease family.

Its subcellular location is the cytoplasm. In terms of biological role, 3'-to-5' exoribonuclease specific for small oligoribonucleotides. This chain is Oligoribonuclease, found in Colwellia psychrerythraea (strain 34H / ATCC BAA-681) (Vibrio psychroerythus).